A 428-amino-acid polypeptide reads, in one-letter code: Gamma-glutamyl phosphate reductase (428 aa).

It belongs to the gamma-glutamyl phosphate reductase family.

It localises to the cytoplasm. The catalysed reaction is L-glutamate 5-semialdehyde + phosphate + NADP(+) = L-glutamyl 5-phosphate + NADPH + H(+). It participates in amino-acid biosynthesis; L-proline biosynthesis; L-glutamate 5-semialdehyde from L-glutamate: step 2/2. Functionally, catalyzes the NADPH-dependent reduction of L-glutamate 5-phosphate into L-glutamate 5-semialdehyde and phosphate. The product spontaneously undergoes cyclization to form 1-pyrroline-5-carboxylate. The polypeptide is Gamma-glutamyl phosphate reductase (Picosynechococcus sp. (strain ATCC 27264 / PCC 7002 / PR-6) (Agmenellum quadruplicatum)).